A 295-amino-acid polypeptide reads, in one-letter code: MSKSSKLCRKTSCPRSNIFCNLIDKIVKRPSLQFLGQWGYHCYEPRIYRTLAKILRYVDLDGFDILLSDYIAFVEKSGYRFELNFNLEFTEICVNTILYWVFARKGNPDFVELLLKKTKDYVQDRSCNLALIWRTFTPVYCPSPLSGITPLLYVAQTRQSNILKILLQYGILEREKNPINIVITILLYPSRVRIMVDHELVDIQEDAKTCLVLCSRVLSAISIREIETQLSLGRRPIISNWLDYIPSTRYKDPCELSHLCRITIRAQLLTNNMLPNGIFSLQIPXRLQKYLNLES.

One copy of the ANK repeat lies at 146 to 176; the sequence is SGITPLLYVAQTRQSNILKILLQYGILEREK. One can recognise an SOCS box domain in the interval 232–295; the sequence is LGRRPIISNW…RLQKYLNLES (64 aa).

Belongs to the ankyrin SOCS box (ASB) family.

It functions in the pathway protein modification; protein ubiquitination. May be a substrate-recognition component of a SCF-like ECS (Elongin-Cullin-SOCS-box protein) E3 ubiquitin-protein ligase complex which mediates the ubiquitination and subsequent proteasomal degradation of target proteins. The protein is Ankyrin repeat and SOCS box protein 17 (ASB17) of Canis lupus familiaris (Dog).